Here is a 156-residue protein sequence, read N- to C-terminus: ATP synthase subunit b (156 aa).

Residues V5–V25 form a helical membrane-spanning segment.

The protein belongs to the ATPase B chain family. As to quaternary structure, F-type ATPases have 2 components, F(1) - the catalytic core - and F(0) - the membrane proton channel. F(1) has five subunits: alpha(3), beta(3), gamma(1), delta(1), epsilon(1). F(0) has three main subunits: a(1), b(2) and c(10-14). The alpha and beta chains form an alternating ring which encloses part of the gamma chain. F(1) is attached to F(0) by a central stalk formed by the gamma and epsilon chains, while a peripheral stalk is formed by the delta and b chains.

The protein localises to the cell inner membrane. F(1)F(0) ATP synthase produces ATP from ADP in the presence of a proton or sodium gradient. F-type ATPases consist of two structural domains, F(1) containing the extramembraneous catalytic core and F(0) containing the membrane proton channel, linked together by a central stalk and a peripheral stalk. During catalysis, ATP synthesis in the catalytic domain of F(1) is coupled via a rotary mechanism of the central stalk subunits to proton translocation. Its function is as follows. Component of the F(0) channel, it forms part of the peripheral stalk, linking F(1) to F(0). This chain is ATP synthase subunit b, found in Shewanella loihica (strain ATCC BAA-1088 / PV-4).